Here is a 78-residue protein sequence, read N- to C-terminus: Omega-conotoxin-like Ac6.5 (78 aa).

Residues 1-22 (MKLTCVVIVAVLLLTACQLLTA) form the signal peptide. A propeptide spanning residues 23-42 (DDSRGTQKHRSLRSTTKVSK) is cleaved from the precursor. 3 disulfide bridges follow: C46/C62, C53/C65, and C61/C72. 4-hydroxyproline is present on residues P55 and P67.

The protein belongs to the conotoxin O1 superfamily. In terms of tissue distribution, expressed by the venom duct.

It is found in the secreted. In terms of biological role, omega-conotoxins act at presynaptic membranes, they bind and block voltage-gated calcium channels (Cav). The chain is Omega-conotoxin-like Ac6.5 from Conus achatinus (Little frog cone).